Here is a 483-residue protein sequence, read N- to C-terminus: MLFLGMANAYVMRTNMSVAIVAMVNHTAIKSGEEEYDDECGDRDIPIDDSQDGEFPWNAALQGYILSSFFYGYVITQIPFGILAKKYGSLRFLGYGMLINSVFAFLVPVAAREGGVWGLCAVRFIQGLGEGPIVPCTHAMLAKWIPPNERSRMGAAVYAGAQFGTIISMPLSGLLAEYGFDGGWPSIFYVFGIVGTVWSIAFLIFVYEDPSTHPKIDEREKKYINESLWGTDVIKSPPIPFKSIVKSLPFYAILFAHMGHNYGYETLMTELPTYMKQVLRFSLKSNGLLSSLPYLAMWLLSMFISVIADWMISSKRFSLTATRKIINSIGQYGPGLALIAASYTGCDRALTLAILTIGVGLNGGIYSGFKINHLDLTPRFAGFLMSITNCSANLAGLLAPIAAGNLISDPSKPVMGQWQIVFFIAAFVYIICGTFYNIFGSGERQFWDNPSEDEQKPALESSSTTNPPRLSNGSSAPRAISSS.

7 consecutive transmembrane segments (helical) span residues Tyr-64 to Ala-84, Leu-90 to Ala-110, Ile-187 to Tyr-207, Leu-292 to Ile-312, Ala-349 to Phe-369, Phe-383 to Ala-403, and Ile-420 to Gly-440. The interval Trp-447–Ser-483 is disordered. The span at Glu-460–Ser-483 shows a compositional bias: polar residues.

The protein belongs to the major facilitator superfamily. Sodium/anion cotransporter family.

It localises to the membrane. Functionally, may be an inorganic phosphate cotransporter. This is Putative inorganic phosphate cotransporter (Picot) from Drosophila ananassae (Fruit fly).